A 202-amino-acid polypeptide reads, in one-letter code: Protein-methionine-sulfoxide reductase heme-binding subunit MsrQ (202 aa).

A run of 6 helical transmembrane segments spans residues 8–28 (LAVF…AWIF), 42–62 (LGLG…LQKL), 75–95 (LGLW…VFIL), 110–130 (PYII…ITSN), 147–167 (LVYL…RADL), and 169–189 (EWTL…PSIA).

Belongs to the MsrQ family. Heterodimer of a catalytic subunit (MsrP) and a heme-binding subunit (MsrQ). The cofactor is FMN. It depends on heme b as a cofactor.

The protein resides in the cell inner membrane. In terms of biological role, part of the MsrPQ system that repairs oxidized periplasmic proteins containing methionine sulfoxide residues (Met-O), using respiratory chain electrons. Thus protects these proteins from oxidative-stress damage caused by reactive species of oxygen and chlorine generated by the host defense mechanisms. MsrPQ is essential for the maintenance of envelope integrity under bleach stress, rescuing a wide series of structurally unrelated periplasmic proteins from methionine oxidation. MsrQ provides electrons for reduction to the reductase catalytic subunit MsrP, using the quinone pool of the respiratory chain. The chain is Protein-methionine-sulfoxide reductase heme-binding subunit MsrQ from Pseudomonas aeruginosa (strain ATCC 15692 / DSM 22644 / CIP 104116 / JCM 14847 / LMG 12228 / 1C / PRS 101 / PAO1).